A 102-amino-acid polypeptide reads, in one-letter code: ATP-dependent Clp protease adapter protein ClpS (102 aa).

Belongs to the ClpS family. Binds to the N-terminal domain of the chaperone ClpA.

Its function is as follows. Involved in the modulation of the specificity of the ClpAP-mediated ATP-dependent protein degradation. The protein is ATP-dependent Clp protease adapter protein ClpS of Herminiimonas arsenicoxydans.